The primary structure comprises 504 residues: Glucose-6-phosphate isomerase (504 aa).

Residue Glu-333 is the Proton donor of the active site. Residues His-364 and Lys-473 contribute to the active site.

It belongs to the GPI family.

It is found in the cytoplasm. The enzyme catalyses alpha-D-glucose 6-phosphate = beta-D-fructose 6-phosphate. The protein operates within carbohydrate biosynthesis; gluconeogenesis. It participates in carbohydrate degradation; glycolysis; D-glyceraldehyde 3-phosphate and glycerone phosphate from D-glucose: step 2/4. In terms of biological role, catalyzes the reversible isomerization of glucose-6-phosphate to fructose-6-phosphate. The chain is Glucose-6-phosphate isomerase from Xanthomonas euvesicatoria pv. vesicatoria (strain 85-10) (Xanthomonas campestris pv. vesicatoria).